A 92-amino-acid chain; its full sequence is Pyrimidine/purine nucleoside phosphorylase (92 aa).

Belongs to the nucleoside phosphorylase PpnP family.

The catalysed reaction is a purine D-ribonucleoside + phosphate = a purine nucleobase + alpha-D-ribose 1-phosphate. It catalyses the reaction adenosine + phosphate = alpha-D-ribose 1-phosphate + adenine. The enzyme catalyses cytidine + phosphate = cytosine + alpha-D-ribose 1-phosphate. It carries out the reaction guanosine + phosphate = alpha-D-ribose 1-phosphate + guanine. The catalysed reaction is inosine + phosphate = alpha-D-ribose 1-phosphate + hypoxanthine. It catalyses the reaction thymidine + phosphate = 2-deoxy-alpha-D-ribose 1-phosphate + thymine. The enzyme catalyses uridine + phosphate = alpha-D-ribose 1-phosphate + uracil. It carries out the reaction xanthosine + phosphate = alpha-D-ribose 1-phosphate + xanthine. In terms of biological role, catalyzes the phosphorolysis of diverse nucleosides, yielding D-ribose 1-phosphate and the respective free bases. Can use uridine, adenosine, guanosine, cytidine, thymidine, inosine and xanthosine as substrates. Also catalyzes the reverse reactions. The polypeptide is Pyrimidine/purine nucleoside phosphorylase (Rhodopirellula baltica (strain DSM 10527 / NCIMB 13988 / SH1)).